The chain runs to 665 residues: non-specific serine/threonine protein kinase (665 aa).

The region spanning 145-597 (FDVHCRIGSG…AEEALKHPFF (453 aa)) is the Protein kinase domain. Residues 151–159 (IGSGTFSTV) and K181 each bind ATP. Catalysis depends on D268, which acts as the Proton acceptor.

This sequence belongs to the protein kinase superfamily. Ser/Thr protein kinase family. Interacts with chif (via N-terminus).

It catalyses the reaction L-seryl-[protein] + ATP = O-phospho-L-seryl-[protein] + ADP + H(+). It carries out the reaction L-threonyl-[protein] + ATP = O-phospho-L-threonyl-[protein] + ADP + H(+). Its function is as follows. Probable serine/threonine protein kinase that forms a complex with the N-terminal peptide of the chiffon protein and may be involved in regulating meiotic processes in the male testis. The chain is non-specific serine/threonine protein kinase from Drosophila melanogaster (Fruit fly).